Consider the following 183-residue polypeptide: Guanylate kinase (183 aa).

The Guanylate kinase-like domain maps to 4–182 (GRVVVLTGPS…AITALEAAIF (179 aa)). ATP is bound at residue 11-18 (GPSGVGKG).

Belongs to the guanylate kinase family.

It localises to the cytoplasm. It catalyses the reaction GMP + ATP = GDP + ADP. The enzyme catalyses dZMP + ATP = dZDP + ADP. Its pathway is purine metabolism. Essential for recycling GMP and indirectly, cGMP. Its function is as follows. (Microbial infection) Catalyzes the phosphorylation of dZMP to dZDP, when the bacterium is infected by a phage that produces the substrate for the synthesis of dZTP (2- amino-2'-deoxyadenosine 5'-triphosphate), which is then used by the phage as a DNA polymerase substrate. The polypeptide is Guanylate kinase (Synechococcus sp. (strain ATCC 27144 / PCC 6301 / SAUG 1402/1) (Anacystis nidulans)).